The chain runs to 311 residues: Nod factor export ATP-binding protein I (311 aa).

Residues 13 to 243 (IDLAGVSKSY…QIGCPVIEIY (231 aa)) enclose the ABC transporter domain. 45-52 (GPNGAGKS) lines the ATP pocket.

The protein belongs to the ABC transporter superfamily. Lipooligosaccharide exporter (TC 3.A.1.102) family. In terms of assembly, the complex is composed of two ATP-binding proteins (NodI) and two transmembrane proteins (NodJ).

Its subcellular location is the cell inner membrane. Its function is as follows. Part of the ABC transporter complex NodIJ involved in the export of the nodulation factors (Nod factors), the bacterial signal molecules that induce symbiosis and subsequent nodulation induction. Nod factors are LCO (lipo-chitin oligosaccharide), a modified beta-1,4-linked N-acetylglucosamine oligosaccharide. This subunit is responsible for energy coupling to the transport system. The chain is Nod factor export ATP-binding protein I from Rhizobium leguminosarum bv. viciae.